Consider the following 93-residue polypeptide: Cobalt transport protein CbiN (93 aa).

Transmembrane regions (helical) follow at residues 5–25 and 63–83; these read LMLLVMVVALVILPFFINHGG and LLFTLQGSLGAAVIFYILGYC.

The protein belongs to the CbiN family. Forms an energy-coupling factor (ECF) transporter complex composed of an ATP-binding protein (A component, CbiO), a transmembrane protein (T component, CbiQ) and 2 possible substrate-capture proteins (S components, CbiM and CbiN) of unknown stoichimetry.

It localises to the cell inner membrane. Its pathway is cofactor biosynthesis; adenosylcobalamin biosynthesis. Functionally, part of the energy-coupling factor (ECF) transporter complex CbiMNOQ involved in cobalt import. This chain is Cobalt transport protein CbiN, found in Salmonella paratyphi B (strain ATCC BAA-1250 / SPB7).